Reading from the N-terminus, the 278-residue chain is Rhomboid protease GlpG (278 aa).

The next 6 helical transmembrane spans lie at 94–114 (AGPL…LMLI), 143–163 (AFLH…WYLG), 175–195 (LLVL…LFSG), 196–216 (ANFG…WLTG), 224–241 (ISLP…LIAG), and 245–267 (ILGL…LMAF). Ser-202 functions as the Nucleophile in the catalytic mechanism. Residue His-255 is part of the active site.

The protein belongs to the peptidase S54 family.

The protein localises to the cell inner membrane. The enzyme catalyses Cleaves type-1 transmembrane domains using a catalytic dyad composed of serine and histidine that are contributed by different transmembrane domains.. Rhomboid-type serine protease that catalyzes intramembrane proteolysis. This chain is Rhomboid protease GlpG, found in Yersinia pseudotuberculosis serotype I (strain IP32953).